A 452-amino-acid chain; its full sequence is Lipase member H (452 aa).

An N-terminal signal peptide occupies residues 1 to 16 (MLRFYLFISLLCLVRS). Residues asparagine 50, asparagine 66, and asparagine 122 are each glycosylated (N-linked (GlcNAc...) asparagine). The Nucleophile role is filled by serine 154. Residue aspartate 178 is the Charge relay system of the active site. A disulfide bridge connects residues cysteine 233 and cysteine 247. The active-site Charge relay system is histidine 249. A glycan (N-linked (GlcNAc...) asparagine) is linked at asparagine 263. Disulfide bonds link cysteine 271–cysteine 282, cysteine 285–cysteine 293, and cysteine 428–cysteine 447.

Belongs to the AB hydrolase superfamily. Lipase family. As to quaternary structure, interacts with TTMP/C3orf52. Expressed in liver and lacrimal gland.

The protein localises to the secreted. Its subcellular location is the cell membrane. It carries out the reaction 1-hexadecanoyl-2-(9Z-octadecenoyl)-sn-glycero-3-phosphate + H2O = 2-(9Z-octadecenoyl)-sn-glycero-3-phosphate + hexadecanoate + H(+). Functionally, hydrolyzes specifically phosphatidic acid (PA) to produce 2-acyl lysophosphatidic acid (LPA; a potent bioactive lipid mediator) and fatty acid. Does not hydrolyze other phospholipids, like phosphatidylserine (PS), phosphatidylcholine (PC) and phosphatidylethanolamine (PE) or triacylglycerol (TG). This is Lipase member H (LIPH) from Oryctolagus cuniculus (Rabbit).